We begin with the raw amino-acid sequence, 123 residues long: Large ribosomal subunit protein bL12 (123 aa).

The disordered stretch occupies residues 98 to 123 (KEGVSKEEAEEIKSKLEDAGATVELK). Positions 100–115 (GVSKEEAEEIKSKLED) are enriched in basic and acidic residues.

This sequence belongs to the bacterial ribosomal protein bL12 family. In terms of assembly, homodimer. Part of the ribosomal stalk of the 50S ribosomal subunit. Forms a multimeric L10(L12)X complex, where L10 forms an elongated spine to which 2 to 4 L12 dimers bind in a sequential fashion. Binds GTP-bound translation factors.

Its function is as follows. Forms part of the ribosomal stalk which helps the ribosome interact with GTP-bound translation factors. Is thus essential for accurate translation. In Halothermothrix orenii (strain H 168 / OCM 544 / DSM 9562), this protein is Large ribosomal subunit protein bL12.